Reading from the N-terminus, the 555-residue chain is Bifunctional epoxide hydrolase 2 (555 aa).

The segment at 1–224 (MTLRAAVFDL…KVTGIQLLNT (224 aa)) is phosphatase. Residues aspartate 9 and aspartate 11 each coordinate Mg(2+). N6-acetyllysine is present on lysine 43. An N6-succinyllysine modification is found at lysine 55. 123-124 (TN) provides a ligand contact to phosphate. Aspartate 185 is a Mg(2+) binding site. Lysine 191 and lysine 215 each carry N6-acetyllysine. An epoxide hydrolase region spans residues 235 to 555 (SDMSHGYVTV…ARNPPVVSKM (321 aa)). The AB hydrolase-1 domain occupies 259–531 (PAVCLCHGFP…CGHWTQMDKP (273 aa)). The Nucleophile role is filled by aspartate 335. At serine 370 the chain carries Phosphoserine. Tyrosine 383 contacts substrate. N6-succinyllysine occurs at positions 421 and 455. Tyrosine 466 acts as the Proton donor in catalysis. Cysteine 522 carries the S-(15-deoxy-Delta12,14-prostaglandin J2-9-yl)cysteine lipid modification. Catalysis depends on histidine 524, which acts as the Proton acceptor. Positions 553–555 (SKM) match the Microbody targeting signal motif. N6-succinyllysine is present on lysine 554.

The protein belongs to the AB hydrolase superfamily. Epoxide hydrolase family. In terms of assembly, homodimer. Requires Mg(2+) as cofactor. The N-terminus is blocked. In terms of processing, the covalent modification of cysteine by 15-deoxy-Delta12,14-prostaglandin-J2 is autocatalytic and reversible. It may occur as an alternative to other cysteine modifications, such as S-nitrosylation and S-palmitoylation.

It localises to the cytoplasm. The protein localises to the peroxisome. The enzyme catalyses an epoxide + H2O = an ethanediol. It catalyses the reaction (9S,10S)-10-hydroxy-9-(phosphooxy)octadecanoate + H2O = (9S,10S)-9,10-dihydroxyoctadecanoate + phosphate. It carries out the reaction 12-phosphooxy-(9Z)-octadecenoate + H2O = 12-hydroxy-(9Z)-octadecenoate + phosphate. The catalysed reaction is 12-phosphooxy-(9E)-octadecenoate + H2O = 12-hydroxy-(9E)-octadecenoate + phosphate. The enzyme catalyses 12-(phosphooxy)octadecanoate + H2O = 12-hydroxyoctadecanoate + phosphate. It catalyses the reaction 8,9-epoxy-(5Z,11Z,14Z)-eicosatrienoate + H2O = 8,9-dihydroxy-(5Z,11Z,14Z)-eicosatrienoate. It carries out the reaction 11,12-epoxy-(5Z,8Z,14Z)-eicosatrienoate + H2O = 11,12-dihydroxy-(5Z,8Z,14Z)-eicosatrienoate. The catalysed reaction is 14,15-epoxy-(5Z,8Z,11Z)-eicosatrienoate + H2O = 14,15-dihydroxy-(5Z,8Z,11Z)-eicosatrienoate. The enzyme catalyses 9,10-epoxy-(12Z)-octadecenoate + H2O = 9,10-dihydroxy-(12Z)-octadecenoate. It catalyses the reaction 8-hydroxy-(11S,12S)-epoxy-(5Z,9E,14Z)-eicosatrienoate + H2O = (8,11R,12S)-trihydroxy-(5Z,9E,14Z)-eicosatrienoate. It carries out the reaction 10-hydroxy-(11S,12S)-epoxy- (5Z,8Z,14Z)-eicosatrienoate + H2O = (10,11S,12R)-trihydroxy-(5Z,8Z,14Z)-eicosatrienoate. The catalysed reaction is 1-tetradecanoyl-sn-glycerol 3-phosphate + H2O = 1-tetradecanoyl-sn-glycerol + phosphate. The enzyme catalyses 1-octadecanoyl-sn-glycero-3-phosphate + H2O = 1-octadecanoyl-sn-glycerol + phosphate. It catalyses the reaction 1-(5Z,8Z,11Z,14Z-eicosatetraenoyl)-sn-glycero-3-phosphate + H2O = 1-(5Z,8Z,11Z,14Z-eicosatetraenoyl)-sn-glycerol + phosphate. It carries out the reaction 1-hexadecanoyl-sn-glycero-3-phosphate + H2O = 1-hexadecanoyl-sn-glycerol + phosphate. The catalysed reaction is 1-(9Z-octadecenoyl)-sn-glycero-3-phosphate + H2O = 1-(9Z-octadecenoyl)-sn-glycerol + phosphate. The enzyme catalyses (8S,9R)-epoxy-(5Z,11Z,14Z)-eicosatrienoate + H2O = (8S,9S)-dihydroxy-(5Z,11Z,14Z)-eicosatrienoate. It catalyses the reaction (11S,12R)-epoxy-(5Z,8Z,14Z)-eicosatrienoate + H2O = (11R,12R)-dihydroxy-(5Z,8Z,14Z)-eicosatrienoate. It carries out the reaction (11S,12R)-epoxy-(5Z,8Z,14Z)-eicosatrienoate + H2O = (11S,12S)-dihydroxy-(5Z,8Z,14Z)-eicosatrienoate. The catalysed reaction is (14S,15R)-epoxy-(5Z,8Z,11Z)-eicosatrienoate + H2O = (14R,15R)-dihydroxy-(5Z,8Z,11Z)-eicosatrienoate. The enzyme catalyses (14S,15R)-epoxy-(5Z,8Z,11Z)-eicosatrienoate + H2O = (14S,15S)-dihydroxy-(5Z,8Z,11Z)-eicosatrienoate. It catalyses the reaction (11R,12S)-epoxy-(5Z,8Z,14Z)-eicosatrienoate + H2O = (11S,12S)-dihydroxy-(5Z,8Z,14Z)-eicosatrienoate. It carries out the reaction (11R,12S)-epoxy-(5Z,8Z,14Z)-eicosatrienoate + H2O = (11R,12R)-dihydroxy-(5Z,8Z,14Z)-eicosatrienoate. The catalysed reaction is (8S,9R)-epoxy-(5Z,11Z,14Z)-eicosatrienoate + H2O = (8R,9R)-dihydroxy-(5Z,11Z,14Z)-eicosatrienoate. The enzyme catalyses (14R,15S)-epoxy-(5Z,8Z,11Z)-eicosatrienoate + H2O = (14R,15R)-dihydroxy-(5Z,8Z,11Z)-eicosatrienoate. With respect to regulation, inhibited by 1-(1-acetylpiperidin-4-yl)-3-(4-(trifl uoromethoxy)phenyl)urea (TPAU), 1-cyclohexyl-3-dodecylurea (CDU), 12-(3-adamantan-1-yl-ureido)-dodecanoic acid (AUDA), 1-((3S, 5S, 7S)-adamantan-1-yl)-3-(5-(2-(2-ethoxyethoxy) ethoxy)pentyl)urea (AEPU), N-adamantyl-N[']-cyclohexyl urea (ACU), 4-(((1S, 4S)-4-(3-((3S, 5S, 7S)-adamantan-1-yl) ureido)cyclohexyl)oxy)benzoic acid (c-AUCB), 4-(((1R, 4R)-4-(3-((3S, 5S, 7S)-adamantan-1-yl)ureido)cyclohexyl)oxy)benzoic acid (t-AUCB), 4-(((1R, 4R)-4-(3-(4(trifluoromethoxy)phenyl)ureido)cyclohexyl)oxy)benzoic acid (t-TAUCB) and to a lesser extent by 8-(3-((3S, 5S, 7S)-adamantan-1-yl)ureido) octanoic acid (AUOA). Phosphatase activity is inhibited by dodecyl-phosphate, phospholipids such as phospho-lysophosphatidic acids and fatty acids such as palmitic acid and lauric acid. In terms of biological role, bifunctional enzyme. The C-terminal domain has epoxide hydrolase activity and acts on epoxides (alkene oxides, oxiranes) and arene oxides. Plays a role in xenobiotic metabolism by degrading potentially toxic epoxides. Also determines steady-state levels of physiological mediators. Functionally, bifunctional enzyme. The N-terminal domain has lipid phosphatase activity, with the highest activity towards threo-9,10-phosphonooxy-hydroxy-octadecanoic acid, followed by erythro-9,10-phosphonooxy-hydroxy-octadecanoic acid, 12-phosphonooxy-octadec-9Z-enoic acid and 12-phosphonooxy-octadec-9E-enoic acid. Has phosphatase activity toward lyso-glycerophospholipids with also some lower activity toward lysolipids of sphingolipid and isoprenoid phosphates. The sequence is that of Bifunctional epoxide hydrolase 2 from Homo sapiens (Human).